A 225-amino-acid chain; its full sequence is Protein-L-isoaspartate O-methyltransferase (225 aa).

Residue S75 is part of the active site.

Belongs to the methyltransferase superfamily. L-isoaspartyl/D-aspartyl protein methyltransferase family.

The protein resides in the cytoplasm. It catalyses the reaction [protein]-L-isoaspartate + S-adenosyl-L-methionine = [protein]-L-isoaspartate alpha-methyl ester + S-adenosyl-L-homocysteine. Catalyzes the methyl esterification of L-isoaspartyl residues in peptides and proteins that result from spontaneous decomposition of normal L-aspartyl and L-asparaginyl residues. It plays a role in the repair and/or degradation of damaged proteins. The protein is Protein-L-isoaspartate O-methyltransferase of Xanthomonas oryzae pv. oryzae (strain PXO99A).